The primary structure comprises 493 residues: Aspartyl/glutamyl-tRNA(Asn/Gln) amidotransferase subunit B (493 aa).

The protein belongs to the GatB/GatE family. GatB subfamily. As to quaternary structure, heterotrimer of A, B and C subunits.

The enzyme catalyses L-glutamyl-tRNA(Gln) + L-glutamine + ATP + H2O = L-glutaminyl-tRNA(Gln) + L-glutamate + ADP + phosphate + H(+). It carries out the reaction L-aspartyl-tRNA(Asn) + L-glutamine + ATP + H2O = L-asparaginyl-tRNA(Asn) + L-glutamate + ADP + phosphate + 2 H(+). Functionally, allows the formation of correctly charged Asn-tRNA(Asn) or Gln-tRNA(Gln) through the transamidation of misacylated Asp-tRNA(Asn) or Glu-tRNA(Gln) in organisms which lack either or both of asparaginyl-tRNA or glutaminyl-tRNA synthetases. The reaction takes place in the presence of glutamine and ATP through an activated phospho-Asp-tRNA(Asn) or phospho-Glu-tRNA(Gln). This chain is Aspartyl/glutamyl-tRNA(Asn/Gln) amidotransferase subunit B, found in Aromatoleum aromaticum (strain DSM 19018 / LMG 30748 / EbN1) (Azoarcus sp. (strain EbN1)).